A 100-amino-acid chain; its full sequence is Urease subunit gamma (100 aa).

The protein belongs to the urease gamma subunit family. As to quaternary structure, heterotrimer of UreA (gamma), UreB (beta) and UreC (alpha) subunits. Three heterotrimers associate to form the active enzyme.

Its subcellular location is the cytoplasm. The enzyme catalyses urea + 2 H2O + H(+) = hydrogencarbonate + 2 NH4(+). It participates in nitrogen metabolism; urea degradation; CO(2) and NH(3) from urea (urease route): step 1/1. This is Urease subunit gamma from Prochlorococcus marinus (strain NATL2A).